Consider the following 296-residue polypeptide: 33 kDa chaperonin (296 aa).

2 cysteine pairs are disulfide-bonded: Cys236-Cys238 and Cys269-Cys272.

Belongs to the HSP33 family. In terms of processing, under oxidizing conditions two disulfide bonds are formed involving the reactive cysteines. Under reducing conditions zinc is bound to the reactive cysteines and the protein is inactive.

Its subcellular location is the cytoplasm. Its function is as follows. Redox regulated molecular chaperone. Protects both thermally unfolding and oxidatively damaged proteins from irreversible aggregation. Plays an important role in the bacterial defense system toward oxidative stress. This is 33 kDa chaperonin from Lactobacillus helveticus (strain DPC 4571).